The following is a 148-amino-acid chain: 3-hydroxyacyl-[acyl-carrier-protein] dehydratase FabZ (148 aa).

Residue H48 is part of the active site.

The protein belongs to the thioester dehydratase family. FabZ subfamily.

The protein localises to the cytoplasm. It catalyses the reaction a (3R)-hydroxyacyl-[ACP] = a (2E)-enoyl-[ACP] + H2O. Its function is as follows. Involved in unsaturated fatty acids biosynthesis. Catalyzes the dehydration of short chain beta-hydroxyacyl-ACPs and long chain saturated and unsaturated beta-hydroxyacyl-ACPs. This chain is 3-hydroxyacyl-[acyl-carrier-protein] dehydratase FabZ, found in Campylobacter fetus subsp. fetus (strain 82-40).